The sequence spans 266 residues: Type 1 encapsulin shell protein (266 aa).

The protein belongs to the encapsulin family. Family 1 subfamily. As to quaternary structure, this encapsulin nanocompartment is formed by 60 subunits; monomers form 12 pentamers which assemble to form shells. Shells are loaded with 4 encapsulated ferritin-like protein decamers (EncFtn) in a tetrahedral arrangement. A 3 nm gap is consistently seen between the shell and the cargo.

The protein localises to the encapsulin nanocompartment. Functionally, shell component of a type 1 encapsulin nanocompartment. Assembles into proteinaceous shells about 21 nm in diameter. Small pores form at, or close to, the 2-, 3-, and 5-fold symmetry axes. Data analysis suggests the 5-fold pores open and close with maximal and minimal aperatures of 15 and 5 Angstroms. Cargo protein Fer (ferritin-like protein, probably stores iron) is targeted to the interior via its C-terminal extension; empty intact shells can be isolated in the absence of cargo protein. The protein is Type 1 encapsulin shell protein of Haliangium ochraceum (strain DSM 14365 / JCM 11303 / SMP-2).